A 119-amino-acid chain; its full sequence is Outer membrane protein assembly factor BamE (119 aa).

The first 19 residues, 1-19, serve as a signal peptide directing secretion; that stretch reads MQFTKWFIALPLAVTALSG. Residue Cys20 is the site of N-palmitoyl cysteine attachment. Cys20 carries the S-diacylglycerol cysteine lipid modification.

This sequence belongs to the BamE family. Part of the Bam complex.

The protein resides in the cell outer membrane. In terms of biological role, part of the outer membrane protein assembly complex, which is involved in assembly and insertion of beta-barrel proteins into the outer membrane. The sequence is that of Outer membrane protein assembly factor BamE from Vibrio cholerae serotype O1 (strain ATCC 39541 / Classical Ogawa 395 / O395).